Reading from the N-terminus, the 369-residue chain is Anhydro-N-acetylmuramic acid kinase (369 aa).

12–19 (GTSMDGVD) contributes to the ATP binding site.

The protein belongs to the anhydro-N-acetylmuramic acid kinase family.

It catalyses the reaction 1,6-anhydro-N-acetyl-beta-muramate + ATP + H2O = N-acetyl-D-muramate 6-phosphate + ADP + H(+). It participates in amino-sugar metabolism; 1,6-anhydro-N-acetylmuramate degradation. The protein operates within cell wall biogenesis; peptidoglycan recycling. Catalyzes the specific phosphorylation of 1,6-anhydro-N-acetylmuramic acid (anhMurNAc) with the simultaneous cleavage of the 1,6-anhydro ring, generating MurNAc-6-P. Is required for the utilization of anhMurNAc either imported from the medium or derived from its own cell wall murein, and thus plays a role in cell wall recycling. This chain is Anhydro-N-acetylmuramic acid kinase, found in Shewanella sp. (strain MR-4).